The chain runs to 66 residues: Cold shock protein 2 (66 aa).

Positions 4-63 constitute a CSD domain; it reads GTVKWFNADKGFGFITGEDGTDVFVHFSAIQTDGFKTLDEGQKVTYDEEQGDRGPQATNV.

The protein resides in the cytoplasm. In Lactiplantibacillus plantarum (strain ATCC BAA-793 / NCIMB 8826 / WCFS1) (Lactobacillus plantarum), this protein is Cold shock protein 2 (cspL).